The following is a 284-amino-acid chain: MLSKQIPLGIYEKALPAGECWLERLQLAKMLGFDFVEMSVDETDDRLSRLDWSREQRLALVNAIVETGVRVPSMCLSAHRRFPLGSEDDAVRAQGLEIMRKAIQFAQDVGIRVIQLAGYDVYYQEANNETRRRFRDGLKESVEMASRAQVTLAMEIMDYPLMNSISKALGYAHYLNNPWFQLYPDIGNLSAWDNDVQMELQAGIGHIVAVHVKDTKPGVFKNVPFGEGVVDFERCFETLKQSGYCGPYLIEMWSETAEDPAAEVAKARDWVKARMAKAGMVEAA.

The protein belongs to the L-ribulose-5-phosphate 3-epimerase family.

The catalysed reaction is L-ribulose 5-phosphate = L-xylulose 5-phosphate. The protein operates within cofactor degradation; L-ascorbate degradation; D-xylulose 5-phosphate from L-ascorbate: step 3/4. Catalyzes the isomerization of L-xylulose-5-phosphate to L-ribulose-5-phosphate. Is involved in the anaerobic L-ascorbate utilization. This is L-ribulose-5-phosphate 3-epimerase UlaE from Escherichia coli O8 (strain IAI1).